The chain runs to 322 residues: HPr kinase/phosphorylase (322 aa).

Active-site residues include H146 and K167. Residue 161–168 (GDSGLGKS) coordinates ATP. S168 lines the Mg(2+) pocket. D185 serves as the catalytic Proton acceptor; for phosphorylation activity. Proton donor; for dephosphorylation activity. The interval 209 to 218 (LEVRGLGLLD) is important for the catalytic mechanism of both phosphorylation and dephosphorylation. Residue E210 participates in Mg(2+) binding. R250 is an active-site residue. Residues 271-276 (QVAAGR) are important for the catalytic mechanism of dephosphorylation.

The protein belongs to the HPrK/P family. In terms of assembly, homohexamer. Mg(2+) serves as cofactor.

The enzyme catalyses [HPr protein]-L-serine + ATP = [HPr protein]-O-phospho-L-serine + ADP + H(+). The catalysed reaction is [HPr protein]-O-phospho-L-serine + phosphate + H(+) = [HPr protein]-L-serine + diphosphate. Its function is as follows. Catalyzes the ATP- as well as the pyrophosphate-dependent phosphorylation of a specific serine residue in HPr, a phosphocarrier protein of the phosphoenolpyruvate-dependent sugar phosphotransferase system (PTS). HprK/P also catalyzes the pyrophosphate-producing, inorganic phosphate-dependent dephosphorylation (phosphorolysis) of seryl-phosphorylated HPr (P-Ser-HPr). The polypeptide is HPr kinase/phosphorylase (Paraburkholderia phytofirmans (strain DSM 17436 / LMG 22146 / PsJN) (Burkholderia phytofirmans)).